We begin with the raw amino-acid sequence, 173 residues long: Small ribosomal subunit protein mS25 (173 aa).

The protein belongs to the mitochondrion-specific ribosomal protein mS25 family. In terms of assembly, component of the mitochondrial small ribosomal subunit (mt-SSU). Mature mammalian 55S mitochondrial ribosomes consist of a small (28S) and a large (39S) subunit. The 28S small subunit contains a 12S ribosomal RNA (12S mt-rRNA) and 30 different proteins. The 39S large subunit contains a 16S rRNA (16S mt-rRNA), a copy of mitochondrial valine transfer RNA (mt-tRNA(Val)), which plays an integral structural role, and 52 different proteins.

The protein localises to the mitochondrion. The protein is Small ribosomal subunit protein mS25 (MRPS25) of Homo sapiens (Human).